The chain runs to 510 residues: tRNA-2-methylthio-N(6)-dimethylallyladenosine synthase (510 aa).

The interval Met1 to Gly25 is disordered. An MTTase N-terminal domain is found at Arg34–His154. [4Fe-4S] cluster contacts are provided by Cys43, Cys79, Cys117, Cys195, Cys199, and Cys202. Residues Ala181 to Ala414 form the Radical SAM core domain. The TRAM domain maps to Lys417 to Ala479. Residues Gln484 to Ala493 are compositionally biased toward polar residues. The disordered stretch occupies residues Gln484–Val510.

The protein belongs to the methylthiotransferase family. MiaB subfamily. In terms of assembly, monomer. [4Fe-4S] cluster serves as cofactor.

It is found in the cytoplasm. The enzyme catalyses N(6)-dimethylallyladenosine(37) in tRNA + (sulfur carrier)-SH + AH2 + 2 S-adenosyl-L-methionine = 2-methylsulfanyl-N(6)-dimethylallyladenosine(37) in tRNA + (sulfur carrier)-H + 5'-deoxyadenosine + L-methionine + A + S-adenosyl-L-homocysteine + 2 H(+). Catalyzes the methylthiolation of N6-(dimethylallyl)adenosine (i(6)A), leading to the formation of 2-methylthio-N6-(dimethylallyl)adenosine (ms(2)i(6)A) at position 37 in tRNAs that read codons beginning with uridine. The polypeptide is tRNA-2-methylthio-N(6)-dimethylallyladenosine synthase (Beijerinckia indica subsp. indica (strain ATCC 9039 / DSM 1715 / NCIMB 8712)).